Reading from the N-terminus, the 363-residue chain is MDQIVNVDEFQELAKQALPKMYYDFYNGGAEDQHTLNENVQAFRRIMFRPRVLVDVSKIDMSTKILGYPISAPIMIAPTGNHKLAHPEGETATAKAAAACNTIMIVSYMSSCTFEEIASSCNAVRFLQIYVYKRRDITAQVVKRAEKAGFKAIVLTVDVPRLGRREADIKNKMISPQLKNFEGLFSTEVRPSKGSGVQAFASRAFDASFSWKDIEWLRSITELPILVKGILTREDALKAVEAGVDGIIVSNHGGRQLDYSPATITVLEEVVQVVRGRIPVLLDGGVRRGTDVFKALALGAQAVLIGRPIIYGLAAKGEDGVKKVIDMLKNEFEITMALSGCPTIDDITRNHVRTENERLHSML.

The FMN hydroxy acid dehydrogenase domain occupies 1–357 (MDQIVNVDEF…TRNHVRTENE (357 aa)). Residues 78–80 (PTG), serine 107, 128–130 (QIY), and threonine 156 each bind FMN. Tyrosine 130 contributes to the a 2-oxocarboxylate binding site. Position 165 (arginine 165) interacts with a 2-oxocarboxylate. 2 residues coordinate FMN: lysine 228 and serine 250. Residue histidine 252 is the Proton acceptor of the active site. Arginine 255 is a binding site for a 2-oxocarboxylate. Residues 283-287 (DGGVR) and 306-307 (GR) contribute to the FMN site. The Microbody targeting signal signature appears at 361 to 363 (SML).

Belongs to the FMN-dependent alpha-hydroxy acid dehydrogenase family. In terms of assembly, homotetramer. FMN is required as a cofactor.

It localises to the peroxisome. The catalysed reaction is a (2S)-2-hydroxycarboxylate + O2 = a 2-oxocarboxylate + H2O2. It catalyses the reaction 2-hydroxy-4-methylpentanoate + O2 = 4-methyl-2-oxopentanoate + H2O2. It carries out the reaction 2-hydroxyhexanoate + O2 = 2-oxohexanoate + H2O2. The enzyme catalyses 2-hydroxyoctanoate + O2 = 2-oxooctanoate + H2O2. In terms of biological role, oxidase that catalyzes the oxidation of a broad range of 2-hydroxyacids to the corresponding 2-oxoacids, with a reduction of O2 to H2O2. Displays the highest activity with leucic acid (2-hydroxy-4-methylpentanoate) and has intermediate activity with 2-hydroxyhexanoate and 2-hydroxyoctanote. Shows lower activity with 2-hydroxydodecanoate, valic acid, and isoleucic acid and extremely low activity with glycolate and L-lactate. Cannot use 2-hydroxyhexadecanoate or D-lactate as substrates. May be involved in the conversion or degradation of 2-hydroxyacids produced during the metabolism of fatty acids or amino acids. This Arabidopsis thaliana (Mouse-ear cress) protein is Peroxisomal (S)-2-hydroxyacid oxidase GLO3 (GLO3).